The primary structure comprises 1142 residues: Envelopment polyprotein (1142 aa).

Positions 1 to 21 (MSKFCLCLSLLGVLLLQVCDT) are cleaved as a signal peptide. Residues 22 to 489 (RSLLELKIEC…LCVPGIHGWS (468 aa)) are Lumenal-facing. Disulfide bonds link Cys-31/Cys-156, Cys-65/Cys-162, Cys-114/Cys-133, Cys-138/Cys-143, Cys-180/Cys-190, and Cys-215/Cys-253. Residue Asn-139 is glycosylated (N-linked (GlcNAc...) asparagine; by host). An N-linked (GlcNAc...) asparagine; by host glycan is attached at Asn-353. Intrachain disulfides connect Cys-382/Cys-441, Cys-386/Cys-395, Cys-411/Cys-430, and Cys-458/Cys-481. Asn-405 carries an N-linked (GlcNAc...) asparagine; by host glycan. The chain crosses the membrane as a helical span at residues 490–510 (TIALLATFCFGWLLIPIISLV). Residues 511 to 633 (SIKIMLLFAY…LSVFRYRSRC (123 aa)) lie on the Cytoplasmic side of the membrane. The interval 522 to 539 (CSKYSNDSKFRLLIEKVK) is binding to the ribonucleoprotein. CCHC-type zinc fingers lie at residues 551–571 (CEVC…KKSC) and 576–597 (CPYC…FKVC). Binding to the ribonucleoprotein stretches follow at residues 594-611 (FKVC…RKSL), 598-609 (KLTTRFQENLRK), and 617-631 (KRGC…RYRS). The ITAM domain maps to 617–640 (KRGCYRTLSVFRYRSRCFVGLVWC). The YxxL motif lies at 621–624 (YRTL). Residues 634–654 (FVGLVWCILLVLELVIWAASA) form a helical membrane-spanning segment. The Lumenal portion of the chain corresponds to 655–1110 (DTVEIKTGWT…EWLMGILSGN (456 aa)). 8 disulfide bridges follow: Cys-741–Cys-776, Cys-745–Cys-783, Cys-757–Cys-890, Cys-771–Cys-901, Cys-786–Cys-909, Cys-812–Cys-821, Cys-829–Cys-838, and Cys-869–Cys-873. The fusion loop stretch occupies residues 763–783 (YEFETGWGCNPGDCPGVGTGC). Asn-933 is a glycosylation site (N-linked (GlcNAc...) asparagine; by host). Disulfide bonds link Cys-975/Cys-1005, Cys-998/Cys-1050, Cys-1015/Cys-1020, Cys-1051/Cys-1056, and Cys-1090/Cys-1094. Residues 1111-1131 (WMVVAVLVVLLILSIFLFSLC) form a helical membrane-spanning segment. Residues 1127–1142 (LFSLCCPRRVVHKKSS) are binding to the ribonucleoprotein. Topologically, residues 1132-1142 (CPRRVVHKKSS) are cytoplasmic.

Belongs to the hantavirus envelope glycoprotein family. In terms of assembly, homodimer. Homotetramer; forms heterotetrameric Gn-Gc spikes in the pre-fusion conformation. Interacts (via C-terminus) with the nucleoprotein. Interacts with host TUFM; this interaction contributes to the virus-induced degradation of mitochondria by autophagy, which leads to degradation of host MAVS and inhibition of type I interferon (IFN) responses. Interacts with host MAP1LC3B; this interaction contributes to the virus-induced degradation of mitochondria by autophagy, which leads to degradation of host MAVS and inhibition of type I interferon (IFN) responses. As to quaternary structure, homodimer. Homotetramer; forms heterotetrameric Gn-Gc spikes in the pre-fusion conformation. Homotrimer; forms homotrimer in the post-fusion conformation at acidic pH. Interacts (via C-terminus) with the nucleoprotein. Envelope polyprotein precursor is quickly cleaved in vivo just after synthesis, presumably by host signal peptidase.

It is found in the virion membrane. It localises to the host cell surface. The protein localises to the host Golgi apparatus membrane. Its subcellular location is the host endoplasmic reticulum membrane. The protein resides in the host mitochondrion. Forms homotetramers with glycoprotein C at the surface of the virion. Attaches the virion to host cell receptors including integrin alpha5/ITGB1. This attachment induces virion internalization predominantly through clathrin-dependent endocytosis. Mediates the assembly and budding of infectious virus particles through its interaction with the nucleocapsid protein and the viral genome. May dysregulate normal immune and endothelial cell responses through an ITAM motif. Translocates to mitochondria, binds to host TUFM and recruits MAP1LC3B. These interactions induce mitochondrial autophagy and therefore destruction of host MAVS leading to inhibition of type I interferon (IFN) responses. Concomitant breakdown of glycoprotein N is apparently prevented by the nucleoprotein that may inhibit Gn-stimulated autophagosome-lysosome fusion. Interacts with the viral genomic RNA. Its function is as follows. Forms homotetramers with glycoprotein N at the surface of the virion. Attaches the virion to host cell receptors including integrin ITGAV/ITGB3. This attachment induces virion internalization predominantly through clathrin-dependent endocytosis. Class II fusion protein that promotes fusion of viral membrane with host endosomal membrane after endocytosis of the virion. The sequence is that of Envelopment polyprotein (GP) from Microtus pennsylvanicus (Meadow vole).